Here is a 548-residue protein sequence, read N- to C-terminus: Chaperonin GroEL (548 aa).

ATP is bound by residues 30 to 33, Lys-51, 87 to 91, Gly-415, 479 to 481, and Asp-495; these read TLGP, DGTTT, and NAA. Residues 525–548 form a disordered region; that stretch reads PKEDKTSDASSSPAGGMGGMGGMM. The segment covering 539–548 has biased composition (gly residues); that stretch reads GGMGGMGGMM.

Belongs to the chaperonin (HSP60) family. As to quaternary structure, forms a cylinder of 14 subunits composed of two heptameric rings stacked back-to-back. Interacts with the co-chaperonin GroES.

The protein localises to the cytoplasm. The catalysed reaction is ATP + H2O + a folded polypeptide = ADP + phosphate + an unfolded polypeptide.. Functionally, together with its co-chaperonin GroES, plays an essential role in assisting protein folding. The GroEL-GroES system forms a nano-cage that allows encapsulation of the non-native substrate proteins and provides a physical environment optimized to promote and accelerate protein folding. The sequence is that of Chaperonin GroEL from Buchnera aphidicola subsp. Rhopalosiphum maidis.